Consider the following 450-residue polypeptide: Vacuolar cation/proton exchanger 1c (450 aa).

At methionine 1–glutamine 73 the chain is on the cytoplasmic side. The segment at alanine 28–lysine 52 is disordered. A helical transmembrane segment spans residues glutamate 74–alanine 94. The Extracellular segment spans residues glutamate 95–arginine 101. The chain crosses the membrane as a helical span at residues valine 102–leucine 122. Over serine 123 to alanine 134 the chain is Cytoplasmic. Residues glycine 135 to leucine 155 traverse the membrane as a helical segment. The cation selection stretch occupies residues glycine 143–valine 178. Residues histidine 156 to serine 170 lie on the Extracellular side of the membrane. Residues isoleucine 171 to isoleucine 191 traverse the membrane as a helical segment. The Cytoplasmic portion of the chain corresponds to glycine 192–glutamine 201. Residues alanine 202–serine 222 form a helical membrane-spanning segment. Topologically, residues lysine 223 to glutamine 239 are extracellular. The helical transmembrane segment at leucine 240–leucine 260 threads the bilayer. Over lysine 261–serine 287 the chain is Cytoplasmic. The chain crosses the membrane as a helical span at residues valine 288–leucine 308. The Extracellular portion of the chain corresponds to serine 309–serine 331. Residues isoleucine 332–phenylalanine 352 form a helical membrane-spanning segment. A cation selection region spans residues glycine 339 to valine 374. The Cytoplasmic portion of the chain corresponds to lysine 353–leucine 360. Residues glycine 361–valine 381 traverse the membrane as a helical segment. The Extracellular portion of the chain corresponds to serine 382–asparagine 385. A helical transmembrane segment spans residues alanine 386 to isoleucine 406. The Cytoplasmic portion of the chain corresponds to threonine 407–asparagine 424. The helical transmembrane segment at leucine 425 to leucine 445 threads the bilayer. The Extracellular portion of the chain corresponds to lysine 446–aspartate 450.

This sequence belongs to the Ca(2+):cation antiporter (CaCA) (TC 2.A.19) family. Cation/proton exchanger (CAX) subfamily. Expressed in leaf blades.

It localises to the vacuole membrane. Its function is as follows. Vacuolar cation/proton exchanger (CAX). Translocates Ca(2+) and other metal ions into vacuoles using the proton gradient formed by H(+)-ATPase and H(+)-pyrophosphatase. This chain is Vacuolar cation/proton exchanger 1c (CAX1c), found in Oryza sativa subsp. japonica (Rice).